A 142-amino-acid chain; its full sequence is Neuritin (142 aa).

The N-terminal stretch at 1 to 27 (MGLKLNGRYISLILAVQIAYLVQAVRA) is a signal peptide. Glycine 116 carries GPI-anchor amidated glycine lipidation. A propeptide spans 117–142 (AAGSLLPAFPVLLVSLSAALATWLSF) (removed in mature form).

The protein belongs to the neuritin family. Component of the outer core of AMPAR complex. AMPAR complex consists of an inner core made of 4 pore-forming GluA/GRIA proteins (GRIA1, GRIA2, GRIA3 and GRIA4) and 4 major auxiliary subunits arranged in a twofold symmetry. One of the two pairs of distinct binding sites is occupied either by CNIH2, CNIH3 or CACNG2, CACNG3. The other harbors CACNG2, CACNG3, CACNG4, CACNG8 or GSG1L. This inner core of AMPAR complex is complemented by outer core constituents binding directly to the GluA/GRIA proteins at sites distinct from the interaction sites of the inner core constituents. Outer core constituents include at least PRRT1, PRRT2, CKAMP44/SHISA9, FRRS1L and NRN1. The proteins of the inner and outer core serve as a platform for other, more peripherally associated AMPAR constituents. Alone or in combination, these auxiliary subunits control the gating and pharmacology of the AMPAR complex and profoundly impact their biogenesis and protein processing.

It localises to the cell membrane. Its subcellular location is the synapse. Functionally, promotes neurite outgrowth and especially branching of neuritic processes in primary hippocampal and cortical cells. This Homo sapiens (Human) protein is Neuritin (NRN1).